Here is a 931-residue protein sequence, read N- to C-terminus: MSHPKLESSSNKEIITEEVGLLKQLLDEATQKLIGSESFDKIEKIVSLSSTDDYTGLKETISALSNEEMVIVSRYFSILPLLINISEDVDLAYEINYKNNLNQDYLGKLSTTIDVVAGHENAKDILEHVNVVPVLTAHPTQVQRKTVLELTSKIHDLLRKYRDVKAGIVNQEKWYADLRRYIGIIMQTDTIREKKLKVKNEITNVMEYYNRSLIKAVTKLTAEYKALAAKKGIHLENPKPLTMGMWIGGDRDGNPFVTAETLRLSAMVQSEVIINHYIEQLNELYRNMSLSINLTEVSPELVTLANQSQDNSVYRENEPYRKAFNFIQDKLVQTLLNLKVGSSPKEKFVSRQESSDIVGRYIKSHIAQVASDIQTEELPAYATAEEFKQDLLLVKQSLVQYGQDSLVDGELACLIQAVDIFGFYLATIDMRQDSSINEACVAELLKSANIVDDYSSLSEEEKCQLLLKELTEDPRTLSSTHAPKSELLQKELAIFQTARELKDQLGEDIINQHIISHTESVSDMFELAIMLKEVGLIDANQARIQIVPLFETIEDLDNSRDIMTQYLHYELVKKWIATNNNYQEIMLGYSDSNKDGGYLSSGWTLYKAQNELTKIGEENGIKITFFHGRGGTVGRGGGPSYEAITSQPFGSIKDRIRLTEQGEIIENKYGNQDAAYYNLEMLISASIDRMVTRMITNPNEIDNFRETMDGIVSESNAVYRNLVFDNPYFYDYFFEASPIKEVSSLNIGSRPAARKTITEISGLRAIPWVFSWSQNRIMFPGWYGVGSAFKHFIEQDEANLAKLQTMYQKWPFFNSLLSNVDMVLSKSNMNIALQYAQLAGSKEVRDVFNIILNEWQLTKDMILAIEQHDNLLEENPMLHASLDYRLPYFNVLNYVQIELIKRLRSNQLDEDYEKLIHITINGIATGLRNSG.

Catalysis depends on residues His-138 and Lys-594.

This sequence belongs to the PEPCase type 1 family. Requires Mg(2+) as cofactor.

It carries out the reaction oxaloacetate + phosphate = phosphoenolpyruvate + hydrogencarbonate. Forms oxaloacetate, a four-carbon dicarboxylic acid source for the tricarboxylic acid cycle. The chain is Phosphoenolpyruvate carboxylase from Streptococcus agalactiae serotype Ia (strain ATCC 27591 / A909 / CDC SS700).